A 75-amino-acid polypeptide reads, in one-letter code: Small ribosomal subunit protein bS16 (75 aa).

This sequence belongs to the bacterial ribosomal protein bS16 family.

The chain is Small ribosomal subunit protein bS16 from Campylobacter jejuni subsp. jejuni serotype O:23/36 (strain 81-176).